We begin with the raw amino-acid sequence, 157 residues long: Probable succinate transporter subunit YjjB (157 aa).

Transmembrane regions (helical) follow at residues 10 to 30 (LAQD…VFNV), 55 to 75 (AGFN…SIGI), 87 to 107 (IFTV…TAMI), and 129 to 149 (FLKA…PGLW).

The protein belongs to the ThrE exporter (TC 2.A.79) family. As to quaternary structure, the transporter is composed of YjjB and YjjP.

The protein resides in the cell inner membrane. Its function is as follows. Involved in succinate export with YjjP. Both proteins are required for export. Participates in succinate export, but also in the export of other dicarboxylates, such as fumarate and malate. Contributes to succinate production under both aerobic and anaerobic conditions, and increases fumarate and malate production during anaerobic succinate production. This chain is Probable succinate transporter subunit YjjB, found in Klebsiella aerogenes (strain ATCC 13048 / DSM 30053 / CCUG 1429 / JCM 1235 / KCTC 2190 / NBRC 13534 / NCIMB 10102 / NCTC 10006 / CDC 819-56) (Enterobacter aerogenes).